The sequence spans 118 residues: Cell division protein FtsB (118 aa).

Residues 1-6 (MRNWRW) are Cytoplasmic-facing. A helical transmembrane segment spans residues 7–24 (LLLVLAALLAWLQHRFWF). Topologically, residues 25–118 (GPGNSGEVRM…DLSQPRREKR (94 aa)) are periplasmic. Positions 30-66 (GEVRMLQVQIVQQHQENERLRQRNASLAAEVKNLKDG) form a coiled coil. The tract at residues 98-118 (LPNDTSADHGVDLSQPRREKR) is disordered. The span at 103–118 (SADHGVDLSQPRREKR) shows a compositional bias: basic and acidic residues.

The protein belongs to the FtsB family. Part of a complex composed of FtsB, FtsL and FtsQ.

The protein localises to the cell inner membrane. Essential cell division protein. May link together the upstream cell division proteins, which are predominantly cytoplasmic, with the downstream cell division proteins, which are predominantly periplasmic. The polypeptide is Cell division protein FtsB (Xylella fastidiosa (strain M12)).